A 62-amino-acid chain; its full sequence is Photosystem II reaction center protein Z (62 aa).

Transmembrane regions (helical) follow at residues 8–28 (AVFA…LVFA) and 41–61 (FSGT…NSLI).

The protein belongs to the PsbZ family. As to quaternary structure, PSII is composed of 1 copy each of membrane proteins PsbA, PsbB, PsbC, PsbD, PsbE, PsbF, PsbH, PsbI, PsbJ, PsbK, PsbL, PsbM, PsbT, PsbY, PsbZ, Psb30/Ycf12, at least 3 peripheral proteins of the oxygen-evolving complex and a large number of cofactors. It forms dimeric complexes.

Its subcellular location is the plastid. It is found in the chloroplast thylakoid membrane. Its function is as follows. May control the interaction of photosystem II (PSII) cores with the light-harvesting antenna, regulates electron flow through the 2 photosystem reaction centers. PSII is a light-driven water plastoquinone oxidoreductase, using light energy to abstract electrons from H(2)O, generating a proton gradient subsequently used for ATP formation. The sequence is that of Photosystem II reaction center protein Z from Hordeum vulgare (Barley).